The sequence spans 1472 residues: Vacuolar cation-transporting ATPase YPK9 (1472 aa).

N-acetylmethionine is present on Met-1. Polar residues-rich tracts occupy residues 1 to 12 (MDIPSSNQIQHG) and 72 to 87 (SFQSSNLPSPHSSGNL). Disordered stretches follow at residues 1-32 (MDIPSSNQIQHGQRSERNRRMPRASFSSTATT), 71-115 (HSFQ…SRNP), and 179-273 (AKSY…DDVH). Residues 1–293 (MDIPSSNQIQ…YHEKFYPQYA (293 aa)) are Cytoplasmic-facing. Phosphothreonine is present on Thr-95. Composition is skewed to low complexity over residues 103–115 (SSAEQSRSSSRNP) and 211–222 (SATHSSSSLSRY). At Ser-108 the chain carries Phosphoserine. A compositionally biased stretch (acidic residues) spans 234-243 (SQTDEILEDE). The helical transmembrane segment at 294 to 315 (PNLHYQRFYIAEEDLVIGIAAY) threads the bilayer. At 316–321 (QTSKFW) the chain is on the vacuolar side. Residues 322–344 (YIIYNLCCFLTFGLVYLLTRWLP) form a helical membrane-spanning segment. Topologically, residues 345–488 (HLKVKLYGVK…INLRMKTTSE (144 aa)) are cytoplasmic. The helical transmembrane segment at 489–511 (ILFNEVLHPFYVFQVFSIILWGI) threads the bilayer. The Vacuolar portion of the chain corresponds to 512–514 (DEY). Residues 515–533 (YYYAACIFLISVLSIFDSL) traverse the membrane as a helical segment. The Cytoplasmic portion of the chain corresponds to 534-693 (NEQKKVSRNL…PTGFKFYRDS (160 aa)). A helical transmembrane segment spans residues 694–713 (FKYIGFMSLIAIFGFCVSCV). Residues 714 to 726 (QFIKLGLDKKTMI) lie on the Vacuolar side of the membrane. Residues 727–748 (LRALDIITIVVPPALPATLTIG) traverse the membrane as a helical segment. Topologically, residues 749-1244 (TNFALSRLKE…ALVTSFACFQ (496 aa)) are cytoplasmic. The active-site 4-aspartylphosphate intermediate is Asp-781. 2 positions are modified to phosphoserine: Ser-1117 and Ser-1120. Mg(2+) contacts are provided by Asp-1187 and Asp-1191. The chain crosses the membrane as a helical span at residues 1245 to 1264 (YMSLYSAIQFITITILYSRG). The Vacuolar portion of the chain corresponds to 1265 to 1271 (SNLGDFQ). A helical membrane pass occupies residues 1272–1289 (FLYIDLLLIVPIAICMSW). The Cytoplasmic portion of the chain corresponds to 1290-1307 (SKSYEKIDKKRPSANLVS). The helical transmembrane segment at 1308–1331 (PKILVPLLISVFLVFLFQFIPWII) threads the bilayer. The Vacuolar segment spans residues 1332-1351 (VQKMSWYIKPIVGGDDAVQS). The helical transmembrane segment at 1352-1374 (SDNTVLFFVSNFQYILTAIVLSV) threads the bilayer. Topologically, residues 1375 to 1387 (GPPYREPMSKNFE) are cytoplasmic. Residues 1388–1407 (FIVDITVSIGASLLLMTLDT) form a helical membrane-spanning segment. The Vacuolar segment spans residues 1408-1423 (ESYLGKMLQLTPISNS). A helical membrane pass occupies residues 1424–1446 (FTMFIIVWVILNYYAQLYIPPSI). The Cytoplasmic segment spans residues 1447–1472 (KGWLKKKKSSKKYKLLIQEEMKLKEV).

It belongs to the cation transport ATPase (P-type) (TC 3.A.3) family. Type V subfamily.

The protein localises to the vacuole membrane. It catalyses the reaction ATP + H2O = ADP + phosphate + H(+). Vacuolar transporter which plays a role in sequestration of divalent heavy metal ions. The chain is Vacuolar cation-transporting ATPase YPK9 (YPK9) from Saccharomyces cerevisiae (strain ATCC 204508 / S288c) (Baker's yeast).